The chain runs to 523 residues: Bifunctional purine biosynthesis protein PurH (523 aa).

One can recognise an MGS-like domain in the interval 4 to 152; the sequence is DHIRRPIRRA…KNHPSVAVVT (149 aa).

The protein belongs to the PurH family.

It catalyses the reaction (6R)-10-formyltetrahydrofolate + 5-amino-1-(5-phospho-beta-D-ribosyl)imidazole-4-carboxamide = 5-formamido-1-(5-phospho-D-ribosyl)imidazole-4-carboxamide + (6S)-5,6,7,8-tetrahydrofolate. It carries out the reaction IMP + H2O = 5-formamido-1-(5-phospho-D-ribosyl)imidazole-4-carboxamide. The protein operates within purine metabolism; IMP biosynthesis via de novo pathway; 5-formamido-1-(5-phospho-D-ribosyl)imidazole-4-carboxamide from 5-amino-1-(5-phospho-D-ribosyl)imidazole-4-carboxamide (10-formyl THF route): step 1/1. Its pathway is purine metabolism; IMP biosynthesis via de novo pathway; IMP from 5-formamido-1-(5-phospho-D-ribosyl)imidazole-4-carboxamide: step 1/1. This Mycobacterium marinum (strain ATCC BAA-535 / M) protein is Bifunctional purine biosynthesis protein PurH.